A 356-amino-acid chain; its full sequence is Butyrate kinase (356 aa).

This sequence belongs to the acetokinase family.

Its subcellular location is the cytoplasm. It catalyses the reaction butanoate + ATP = butanoyl phosphate + ADP. The protein operates within lipid metabolism; butanoate metabolism. In terms of biological role, catalyzes the conversion of butyryl-CoA through butyryl phosphate to butyrate. This Clostridium tetani (strain Massachusetts / E88) protein is Butyrate kinase.